A 270-amino-acid polypeptide reads, in one-letter code: MTKVVVTGAAGRMGTQIVRLVRATPGLSVSGAVERAGSPAIGKDAGTLAGGEPLGVAVVDDLAKALPGADVVIDFTSHEASVRHAQACAAAGVALVIGSTGFTPDAKAKVAEAARKVPVVLSPNMSVGVNVVFELVRQAARVLGDAYDVEVVEIHHKHKRDAPSGTAVRLGEVAAEALGRAPADALAYSRHGILGERPPWQIGIQTLRGGDVVGEHTVFFCGEGERVEITHRATSREQFARGAARAAAWLPGKAPGVYDMADVLGLRGGK.

NAD(+)-binding positions include 8 to 13 and E34; that span reads GAAGRM. R35 serves as a coordination point for NADP(+). NAD(+)-binding positions include 98–100 and 122–125; these read GST and SPNM. H155 functions as the Proton donor/acceptor in the catalytic mechanism. H156 contributes to the (S)-2,3,4,5-tetrahydrodipicolinate binding site. The Proton donor role is filled by K159. (S)-2,3,4,5-tetrahydrodipicolinate is bound at residue 165-166; it reads GT.

This sequence belongs to the DapB family.

It localises to the cytoplasm. It catalyses the reaction (S)-2,3,4,5-tetrahydrodipicolinate + NAD(+) + H2O = (2S,4S)-4-hydroxy-2,3,4,5-tetrahydrodipicolinate + NADH + H(+). The catalysed reaction is (S)-2,3,4,5-tetrahydrodipicolinate + NADP(+) + H2O = (2S,4S)-4-hydroxy-2,3,4,5-tetrahydrodipicolinate + NADPH + H(+). It participates in amino-acid biosynthesis; L-lysine biosynthesis via DAP pathway; (S)-tetrahydrodipicolinate from L-aspartate: step 4/4. Functionally, catalyzes the conversion of 4-hydroxy-tetrahydrodipicolinate (HTPA) to tetrahydrodipicolinate. This chain is 4-hydroxy-tetrahydrodipicolinate reductase, found in Anaeromyxobacter dehalogenans (strain 2CP-C).